The primary structure comprises 104 residues: UPF0145 protein NP_2600A (104 aa).

The protein belongs to the UPF0145 family.

The sequence is that of UPF0145 protein NP_2600A from Natronomonas pharaonis (strain ATCC 35678 / DSM 2160 / CIP 103997 / JCM 8858 / NBRC 14720 / NCIMB 2260 / Gabara) (Halobacterium pharaonis).